The following is a 134-amino-acid chain: Small ribosomal subunit protein uS8c (134 aa).

The protein belongs to the universal ribosomal protein uS8 family. As to quaternary structure, part of the 30S ribosomal subunit.

It is found in the plastid. It localises to the chloroplast. Functionally, one of the primary rRNA binding proteins, it binds directly to 16S rRNA central domain where it helps coordinate assembly of the platform of the 30S subunit. In Lactuca sativa (Garden lettuce), this protein is Small ribosomal subunit protein uS8c (rps8).